Reading from the N-terminus, the 193-residue chain is Protein GrpE (193 aa).

The interval 1 to 26 is disordered; it reads MTKKHHKEQEEIQETIKTEAAEENVG. The span at 7 to 20 shows a compositional bias: basic and acidic residues; that stretch reads KEQEEIQETIKTEA.

This sequence belongs to the GrpE family. Homodimer.

Its subcellular location is the cytoplasm. Functionally, participates actively in the response to hyperosmotic and heat shock by preventing the aggregation of stress-denatured proteins, in association with DnaK and GrpE. It is the nucleotide exchange factor for DnaK and may function as a thermosensor. Unfolded proteins bind initially to DnaJ; upon interaction with the DnaJ-bound protein, DnaK hydrolyzes its bound ATP, resulting in the formation of a stable complex. GrpE releases ADP from DnaK; ATP binding to DnaK triggers the release of the substrate protein, thus completing the reaction cycle. Several rounds of ATP-dependent interactions between DnaJ, DnaK and GrpE are required for fully efficient folding. In Chlorobaculum parvum (strain DSM 263 / NCIMB 8327) (Chlorobium vibrioforme subsp. thiosulfatophilum), this protein is Protein GrpE.